Here is a 509-residue protein sequence, read N- to C-terminus: Cytochrome P450 monooxygenase AFT11-1 (509 aa).

Residue cysteine 432 participates in heme binding.

This sequence belongs to the cytochrome P450 family. Heme is required as a cofactor.

It participates in mycotoxin biosynthesis. Functionally, cytochrome P450 monooxygenase; part of the gene clusters that mediate the biosynthesis of the host-selective toxins (HSTs) AF-toxins responsible for Alternaria black spot of strawberry disease by the strawberry pathotype. AF-toxin I and III are valine derivatives of 2,3-dyhydroxy-isovaleric acid and 2-hydroxy-isovaleric acid respectively, while AF II is an isoleucine derivative of 2-hydroxy-valeric acid. These derivatives are bound to a 9,10-epoxy-8-hydroxy-9-methyl-decatrienoic acid (EDA) moiety. On cellular level, AF-toxins affect plasma membrane of susceptible cells and cause a sudden increase in loss of K(+) after a few minutes of toxin treatment. The aldo-keto reductase AFTS1 catalyzes the conversion of 2-keto-isovaleric acid (2-KIV) to 2-hydroxy-isovaleric acid (2-HIV) by reduction of its ketone to an alcohol. The acyl-CoA ligase AFT1, the hydrolase AFT2 and the enoyl-CoA hydratases AFT3 and AFT6, but also the polyketide synthase AFT9, the acyl-CoA dehydrogenase AFT10, the cytochrome P450 monooxygenase AFT11 and the oxidoreductase AFT12 are all involved in the biosynthesis of the AK-, AF- and ACT-toxin common EDA structural moiety. The exact function of each enzyme, and of additional enzymes identified within the AF-toxin clusters have still to be determined. The protein is Cytochrome P450 monooxygenase AFT11-1 of Alternaria alternata (Alternaria rot fungus).